A 282-amino-acid polypeptide reads, in one-letter code: Para-Rep C2 (282 aa).

The CRESS-DNA virus Rep endonuclease domain maps to 1–99 (MASKRWCFTL…ETLIAEIGAP (99 aa)). Residues 7–10 (CFTL) carry the RCR-1 motif. Residues E38 and H47 each contribute to the a divalent metal cation site. The RCR-2 motif lies at 47-49 (HLQ). The short motif at 56–77 (KLIRLGGLKKKFGSIAHWEIAK) is the Nuclear localization signal element. The For DNA cleavage activity role is filled by Y86. Positions 86-89 (YCTK) match the RCR-3 motif. Positions 99-105 (PVKKGSN) match the Nuclear localization signal motif. 174–182 (GPDGGEGKS) contributes to the ATP binding site.

Belongs to the nanoviridea/circoviridae replication-associated protein family. Homooligomer (Potential). Rep binds to repeated DNA motifs (iterons). It depends on Mg(2+) as a cofactor. Requires Mn(2+) as cofactor.

The protein resides in the host nucleus. The catalysed reaction is ATP + H2O = ADP + phosphate + H(+). Initiates and terminates the replication only of its own subviral DNA molecule. The closed circular ssDNA genome is first converted to a superhelical dsDNA. Rep binds a specific hairpin at the genome origin of replication. Introduces an endonucleolytic nick within the intergenic region of the genome, thereby initiating the rolling circle replication (RCR). Following cleavage, binds covalently to the 5'-phosphate of DNA as a tyrosyl ester. The cleavage gives rise to a free 3'-OH that serves as a primer for the cellular DNA polymerase. The polymerase synthesizes the (+) strand DNA by rolling circle mechanism. After one round of replication, a Rep-catalyzed nucleotidyl transfer reaction releases a circular single-stranded virus genome, thereby terminating the replication. Displays origin-specific DNA cleavage, nucleotidyl transferase, ATPase and helicase activities. This Milk vetch dwarf C2 alphasatellite (MVDC2A) protein is Para-Rep C2 (C2).